Consider the following 298-residue polypeptide: Heat stress transcription factor C-2a (298 aa).

The segment at 105–128 (SSGGGGAKRKEEAGGCGGGGEAAA) is disordered. The interval 145 to 181 (LRREQREIEGRVAAMWRRVQETERRPKQMLAFLVKVV) is hydrophobic repeat HR-A/B. A Nuclear localization signal motif is present at residues 213–216 (KRPR).

It belongs to the HSF family. Class C subfamily. In terms of assembly, homotrimer. In terms of processing, exhibits temperature-dependent phosphorylation.

It is found in the nucleus. In terms of biological role, transcriptional regulator that specifically binds DNA of heat shock promoter elements (HSE). This chain is Heat stress transcription factor C-2a (HSFC2A), found in Oryza sativa subsp. japonica (Rice).